The primary structure comprises 819 residues: DNA topoisomerase 4 subunit A (819 aa).

A Topo IIA-type catalytic domain is found at 30-496 (LPDIRDGLKP…QIIEIDTASL (467 aa)). The active-site O-(5'-phospho-DNA)-tyrosine intermediate is the Tyr-118.

The protein belongs to the type II topoisomerase GyrA/ParC subunit family. ParC type 2 subfamily. As to quaternary structure, heterotetramer composed of ParC and ParE.

The protein resides in the cell membrane. It catalyses the reaction ATP-dependent breakage, passage and rejoining of double-stranded DNA.. In terms of biological role, topoisomerase IV is essential for chromosome segregation. It relaxes supercoiled DNA. Performs the decatenation events required during the replication of a circular DNA molecule. The polypeptide is DNA topoisomerase 4 subunit A (Streptococcus pyogenes serotype M3 (strain SSI-1)).